A 490-amino-acid polypeptide reads, in one-letter code: Stomatal closure-related actin-binding protein 3 (490 aa).

The protein belongs to the SCAB family. In terms of tissue distribution, expressed in roots, stems, leaves, siliques and flowers.

The protein resides in the cytoplasm. The protein localises to the cytoskeleton. Functionally, probable plant-specific actin binding protein that bundles and stabilizes microfilaments (MFs). The sequence is that of Stomatal closure-related actin-binding protein 3 from Arabidopsis thaliana (Mouse-ear cress).